The sequence spans 521 residues: (+)-kolavenyl diphosphate synthase (521 aa).

Mg(2+) is bound by residues Asp311 and Asp313. The short motif at 311–314 (DGDD) is the DXDD motif element.

It belongs to the terpene synthase family. The cofactor is Mg(2+).

It carries out the reaction (2E,6E,10E)-geranylgeranyl diphosphate = (+)-kolavenyl diphosphate. Involved in the biosynthesis of (+)-O-methylkolavelool. Catalyzes the conversion of geranylgeranyl diphosphate into (+)-kolavenyl diphosphate. The chain is (+)-kolavenyl diphosphate synthase from Herpetosiphon aurantiacus (strain ATCC 23779 / DSM 785 / 114-95).